The primary structure comprises 341 residues: MAQYKGAASEAGRAMQLMKKREREREQLEQLKQKIAEDNMVKSNIDKKFSAHYDAVEQELKSSTVGLVTLNDMKAKQEALVKEREKQLAKKEQSKELQLKLEKQKEKKRKEEQKRKIASLSFNPDEGEDEEEEEEEEEEEEEDEIEEEICLPVKKKKLGKNPDVDTSFLPDRDREEEENRLREELRQEWERKQEKIKSEEIEITFSYWDGSGHRKTVKMKKGNTIQQFLQRALEVLRKDFSELRSAGVEHLMYIKEDLIIPHHHSFYDFIVTKARGKSGPLFNFDVHDDIRLVNDATVEKDESHAGKVVLRSWYEKNKHIFPASRWEPYDPEKKWDKYTIR.

Disordered stretches follow at residues Met1–Gln27 and Leu80–Glu147. Positions Leu80–Arg115 are enriched in basic and acidic residues. Residues Asp125–Glu147 are compositionally biased toward acidic residues.

It belongs to the FAM50 family.

The protein localises to the nucleus. Functionally, probably involved in the regulation of pre-mRNA splicing. The chain is Protein FAM50A (fam50a) from Danio rerio (Zebrafish).